The primary structure comprises 594 residues: Invasin CotH2 (594 aa).

The first 19 residues, 1–19 (MKLSLTIVSSSFLVAIAHA), serve as a signal peptide directing secretion. Asparagine 77, asparagine 162, asparagine 226, asparagine 316, asparagine 441, asparagine 519, and asparagine 533 each carry an N-linked (GlcNAc...) asparagine glycan. The segment at 529–565 (PPAANGTATSTNDGGNTHTAAGESKPASSSESSGSKI) is disordered. The span at 534–547 (GTATSTNDGGNTHT) shows a compositional bias: polar residues. The span at 548–565 (AAGESKPASSSESSGSKI) shows a compositional bias: low complexity. Residue serine 571 is the site of GPI-anchor amidated serine attachment. Residues 572–594 (GASRSAVSTVLLGVTALVATAIF) constitute a propeptide, removed in mature form.

As to quaternary structure, interacts with host epithelial cell surface HSPA5/BiP protein.

It localises to the cell membrane. Its function is as follows. Promotes invasion of host epithelial cells by adhering to receptors on the host cell surface to facilitate endocytosis of the pathogen into host cells. Binds HSPA5/BiP protein on the cell surface of host epithelial cells. The protein is Invasin CotH2 of Rhizopus delemar (strain RA 99-880 / ATCC MYA-4621 / FGSC 9543 / NRRL 43880) (Mucormycosis agent).